Consider the following 142-residue polypeptide: Transcription antitermination protein NusB (142 aa).

The protein belongs to the NusB family.

Involved in transcription antitermination. Required for transcription of ribosomal RNA (rRNA) genes. Binds specifically to the boxA antiterminator sequence of the ribosomal RNA (rrn) operons. The protein is Transcription antitermination protein NusB of Trichlorobacter lovleyi (strain ATCC BAA-1151 / DSM 17278 / SZ) (Geobacter lovleyi).